A 318-amino-acid chain; its full sequence is Acetyl-coenzyme A carboxylase carboxyl transferase subunit alpha (318 aa).

The CoA carboxyltransferase C-terminal domain occupies 38–292 (KLEKRLAKLE…NKTITKSLHA (255 aa)).

The protein belongs to the AccA family. As to quaternary structure, acetyl-CoA carboxylase is a heterohexamer composed of biotin carboxyl carrier protein (AccB), biotin carboxylase (AccC) and two subunits each of ACCase subunit alpha (AccA) and ACCase subunit beta (AccD).

Its subcellular location is the cytoplasm. The enzyme catalyses N(6)-carboxybiotinyl-L-lysyl-[protein] + acetyl-CoA = N(6)-biotinyl-L-lysyl-[protein] + malonyl-CoA. Its pathway is lipid metabolism; malonyl-CoA biosynthesis; malonyl-CoA from acetyl-CoA: step 1/1. Functionally, component of the acetyl coenzyme A carboxylase (ACC) complex. First, biotin carboxylase catalyzes the carboxylation of biotin on its carrier protein (BCCP) and then the CO(2) group is transferred by the carboxyltransferase to acetyl-CoA to form malonyl-CoA. In Listeria welshimeri serovar 6b (strain ATCC 35897 / DSM 20650 / CCUG 15529 / CIP 8149 / NCTC 11857 / SLCC 5334 / V8), this protein is Acetyl-coenzyme A carboxylase carboxyl transferase subunit alpha.